The following is an 807-amino-acid chain: Spondin-1 (807 aa).

A signal peptide spans 1-28 (MRLSPAPLRLSRGPALLALALPLAAALA). Residues 29–194 (FSDETLDKVA…DPTLDGVTDR (166 aa)) enclose the Reelin domain. Disulfide bonds link Cys-44–Cys-128, Cys-156–Cys-182, Cys-199–Cys-336, Cys-200–Cys-340, Cys-202–Cys-415, Cys-443–Cys-480, Cys-454–Cys-489, Cys-459–Cys-494, Cys-502–Cys-538, Cys-513–Cys-517, Cys-548–Cys-554, Cys-559–Cys-595, Cys-570–Cys-574, Cys-605–Cys-610, Cys-615–Cys-650, Cys-626–Cys-630, and Cys-660–Cys-665. The Spondin domain maps to 195-388 (PILDCCACGT…LTSLDHPQSP (194 aa)). Residue Asn-214 is glycosylated (N-linked (GlcNAc...) asparagine). Residues Asp-325, Asp-354, and Asp-358 each coordinate Ca(2+). TSP type-1 domains are found at residues 442–495 (TCIY…PGCS), 501–555 (TCTM…EECS), 558–611 (SCLV…PECH), 614–666 (PCLL…PECP), and 668–721 (DCEL…RKCL). Asn-681 carries an N-linked (GlcNAc...) asparagine glycan. Positions 732-746 (REARESRRSEQLREE) are enriched in basic and acidic residues. A disordered region spans residues 732–752 (REARESRRSEQLREESDGEQF). Residues 754–806 (GCRMRPWTAWSECTKLCGGGIQERYMTVKKRFKSSQFTSCKDKKEIRACNVHP) enclose the TSP type-1 6 domain.

As to quaternary structure, binds to the central extracellular domain of APP and inhibits beta-secretase cleavage of APP. As to expression, expressed at high levels in the floor plate.

The protein localises to the secreted. Its subcellular location is the extracellular space. It localises to the extracellular matrix. Its function is as follows. Cell adhesion protein that promotes the attachment of spinal cord and sensory neuron cells and the outgrowth of neurites in vitro. May contribute to the growth and guidance of axons in both the spinal cord and the PNS. This chain is Spondin-1 (Spon1), found in Rattus norvegicus (Rat).